A 266-amino-acid polypeptide reads, in one-letter code: Oxygen-evolving enhancer protein 2-3, chloroplastic (266 aa).

Residues 1-80 (MASTQCFLHH…VGSKVSPADA (80 aa)) constitute a chloroplast transit peptide.

This sequence belongs to the PsbP family.

Its subcellular location is the plastid. The protein resides in the chloroplast thylakoid membrane. Functionally, may be involved in the regulation of photosystem II. This chain is Oxygen-evolving enhancer protein 2-3, chloroplastic (PSBP3), found in Nicotiana tabacum (Common tobacco).